Consider the following 425-residue polypeptide: Enolase (425 aa).

A (2R)-2-phosphoglycerate-binding site is contributed by glutamine 162. The active-site Proton donor is the glutamate 204. Residues aspartate 241, glutamate 282, and aspartate 309 each contribute to the Mg(2+) site. The (2R)-2-phosphoglycerate site is built by lysine 334, arginine 363, serine 364, and lysine 385. Residue lysine 334 is the Proton acceptor of the active site.

It belongs to the enolase family. The cofactor is Mg(2+).

It is found in the cytoplasm. It localises to the secreted. Its subcellular location is the cell surface. It catalyses the reaction (2R)-2-phosphoglycerate = phosphoenolpyruvate + H2O. Its pathway is carbohydrate degradation; glycolysis; pyruvate from D-glyceraldehyde 3-phosphate: step 4/5. Catalyzes the reversible conversion of 2-phosphoglycerate (2-PG) into phosphoenolpyruvate (PEP). It is essential for the degradation of carbohydrates via glycolysis. The protein is Enolase of Corynebacterium diphtheriae (strain ATCC 700971 / NCTC 13129 / Biotype gravis).